The sequence spans 325 residues: Tyrosine phosphatase H2 (325 aa).

In terms of domain architecture, Tyrosine-protein phosphatase spans Val-27–Tyr-295. Cys-236 functions as the Phosphocysteine intermediate in the catalytic mechanism.

It belongs to the protein-tyrosine phosphatase family.

It localises to the host cytoplasm. The catalysed reaction is O-phospho-L-tyrosyl-[protein] + H2O = L-tyrosyl-[protein] + phosphate. Functionally, suppresses host immune cell adhesion and phagocytosis. Triggers host mitochondrial membrane depolarization and caspase-dependent apoptosis. The polypeptide is Tyrosine phosphatase H2 (H2) (Microplitis demolitor bracovirus (isolate Webb) (MdBV)).